The sequence spans 341 residues: S-adenosylmethionine:tRNA ribosyltransferase-isomerase (341 aa).

The protein belongs to the QueA family. Monomer.

The protein resides in the cytoplasm. The catalysed reaction is 7-aminomethyl-7-carbaguanosine(34) in tRNA + S-adenosyl-L-methionine = epoxyqueuosine(34) in tRNA + adenine + L-methionine + 2 H(+). Its pathway is tRNA modification; tRNA-queuosine biosynthesis. Its function is as follows. Transfers and isomerizes the ribose moiety from AdoMet to the 7-aminomethyl group of 7-deazaguanine (preQ1-tRNA) to give epoxyqueuosine (oQ-tRNA). The polypeptide is S-adenosylmethionine:tRNA ribosyltransferase-isomerase (Clostridium beijerinckii (strain ATCC 51743 / NCIMB 8052) (Clostridium acetobutylicum)).